Reading from the N-terminus, the 234-residue chain is MIKLWPAIDLINATSVRLTEGKYDSEVKMARSAEESVLFYNQYQCVDRIHIVDLIGAKNQVSIESDYINQLRSLTDKPMEVGGGIRDRNTIDTYFNNGIDYCIIGTKGIEDLAWLSHMTQAFPNRLYLSIDAYRRQVKINGWEEDAGLDIFDLLQQVESLPLGGIIYTDISKDGKLEGPNFEITQQLVQATQKPIIASGGIRHQQDLAQLESIGVHAAIVGKAAHNATFWEGLS.

Aspartate 9 acts as the Proton acceptor in catalysis. Aspartate 131 (proton donor) is an active-site residue.

It belongs to the HisA/HisF family.

The protein resides in the cytoplasm. The enzyme catalyses 1-(5-phospho-beta-D-ribosyl)-5-[(5-phospho-beta-D-ribosylamino)methylideneamino]imidazole-4-carboxamide = 5-[(5-phospho-1-deoxy-D-ribulos-1-ylimino)methylamino]-1-(5-phospho-beta-D-ribosyl)imidazole-4-carboxamide. The protein operates within amino-acid biosynthesis; L-histidine biosynthesis; L-histidine from 5-phospho-alpha-D-ribose 1-diphosphate: step 4/9. This is 1-(5-phosphoribosyl)-5-[(5-phosphoribosylamino)methylideneamino] imidazole-4-carboxamide isomerase from Staphylococcus saprophyticus subsp. saprophyticus (strain ATCC 15305 / DSM 20229 / NCIMB 8711 / NCTC 7292 / S-41).